The chain runs to 105 residues: Large ribosomal subunit protein uL24 (105 aa).

The tract at residues Met1–Ser25 is disordered.

The protein belongs to the universal ribosomal protein uL24 family. In terms of assembly, part of the 50S ribosomal subunit.

In terms of biological role, one of two assembly initiator proteins, it binds directly to the 5'-end of the 23S rRNA, where it nucleates assembly of the 50S subunit. Functionally, one of the proteins that surrounds the polypeptide exit tunnel on the outside of the subunit. This chain is Large ribosomal subunit protein uL24, found in Staphylococcus saprophyticus subsp. saprophyticus (strain ATCC 15305 / DSM 20229 / NCIMB 8711 / NCTC 7292 / S-41).